A 562-amino-acid chain; its full sequence is NAD-dependent malic enzyme (562 aa).

Tyr101 acts as the Proton donor in catalysis. Residue Arg154 participates in NAD(+) binding. The active-site Proton acceptor is the Lys172. A divalent metal cation-binding residues include Glu243, Asp244, and Asp267. Positions 267 and 415 each coordinate NAD(+).

This sequence belongs to the malic enzymes family. As to quaternary structure, homotetramer. The cofactor is Mg(2+). It depends on Mn(2+) as a cofactor.

It catalyses the reaction (S)-malate + NAD(+) = pyruvate + CO2 + NADH. The enzyme catalyses oxaloacetate + H(+) = pyruvate + CO2. The polypeptide is NAD-dependent malic enzyme (Shewanella sp. (strain MR-4)).